Reading from the N-terminus, the 272-residue chain is Shikimate dehydrogenase (NADP(+)) (272 aa).

Residues 14–16 (SKS) and Thr-61 each bind shikimate. Lys-65 serves as the catalytic Proton acceptor. An NADP(+)-binding site is contributed by Glu-77. Shikimate contacts are provided by Asn-86 and Asp-102. NADP(+) is bound by residues 126–130 (GAGGA), 149–154 (NRTVSR), and Met-213. Residue Tyr-215 coordinates shikimate. Gly-237 serves as a coordination point for NADP(+).

It belongs to the shikimate dehydrogenase family. As to quaternary structure, homodimer.

It carries out the reaction shikimate + NADP(+) = 3-dehydroshikimate + NADPH + H(+). It participates in metabolic intermediate biosynthesis; chorismate biosynthesis; chorismate from D-erythrose 4-phosphate and phosphoenolpyruvate: step 4/7. Involved in the biosynthesis of the chorismate, which leads to the biosynthesis of aromatic amino acids. Catalyzes the reversible NADPH linked reduction of 3-dehydroshikimate (DHSA) to yield shikimate (SA). This chain is Shikimate dehydrogenase (NADP(+)), found in Shigella dysenteriae serotype 1 (strain Sd197).